The sequence spans 496 residues: Probable cytosol aminopeptidase (496 aa).

Mn(2+)-binding residues include K266 and D271. The active site involves K278. Mn(2+)-binding residues include D289, D348, and E350. R352 is an active-site residue.

Belongs to the peptidase M17 family. It depends on Mn(2+) as a cofactor.

The protein localises to the cytoplasm. The catalysed reaction is Release of an N-terminal amino acid, Xaa-|-Yaa-, in which Xaa is preferably Leu, but may be other amino acids including Pro although not Arg or Lys, and Yaa may be Pro. Amino acid amides and methyl esters are also readily hydrolyzed, but rates on arylamides are exceedingly low.. The enzyme catalyses Release of an N-terminal amino acid, preferentially leucine, but not glutamic or aspartic acids.. Presumably involved in the processing and regular turnover of intracellular proteins. Catalyzes the removal of unsubstituted N-terminal amino acids from various peptides. The protein is Probable cytosol aminopeptidase of Pseudomonas fluorescens (strain SBW25).